Consider the following 89-residue polypeptide: Small ribosomal subunit protein uS17 (89 aa).

This sequence belongs to the universal ribosomal protein uS17 family. As to quaternary structure, part of the 30S ribosomal subunit.

Its function is as follows. One of the primary rRNA binding proteins, it binds specifically to the 5'-end of 16S ribosomal RNA. This Xylella fastidiosa (strain M12) protein is Small ribosomal subunit protein uS17.